A 152-amino-acid chain; its full sequence is Large ribosomal subunit protein bL9 (152 aa).

Belongs to the bacterial ribosomal protein bL9 family.

Functionally, binds to the 23S rRNA. This is Large ribosomal subunit protein bL9 from Streptococcus thermophilus (strain ATCC BAA-491 / LMD-9).